The primary structure comprises 282 residues: Undecaprenyl-diphosphatase (282 aa).

A run of 7 helical transmembrane segments spans residues 40 to 60, 85 to 105, 115 to 135, 153 to 173, 193 to 213, 230 to 250, and 258 to 278; these read GAAFTAIIQIGTLAAVLMYFW, ARMGWMIAAGTIPIVVFGLLF, SLYWISGALIGLALLLSLAEW, IGWKEALLIGLAQSIALIPGS, AARFSFLLSLPAVFAAGIFQL, LAAATFTSAVVGYLSIAFLLS, and TIFIIYRLLAGILLLLLLSTG.

Belongs to the UppP family.

The protein resides in the cell inner membrane. It carries out the reaction di-trans,octa-cis-undecaprenyl diphosphate + H2O = di-trans,octa-cis-undecaprenyl phosphate + phosphate + H(+). Functionally, catalyzes the dephosphorylation of undecaprenyl diphosphate (UPP). Confers resistance to bacitracin. The protein is Undecaprenyl-diphosphatase of Chlorobium phaeovibrioides (strain DSM 265 / 1930) (Prosthecochloris vibrioformis (strain DSM 265)).